We begin with the raw amino-acid sequence, 256 residues long: Major prion protein (256 aa).

Positions 1 to 24 are cleaved as a signal peptide; the sequence is MVKSHIGSWILVLFVAMWSDVGLC. The interval 25–41 is interaction with ADGRG6; it reads KKRPKPGGGWNTGGSRY. The interaction with GRB2, ERI3 and SYN1 stretch occupies residues 25–233; the sequence is KKRPKPGGGW…ESEAYYQRRA (209 aa). The tract at residues 28–110 is disordered; sequence PKPGGGWNTG…QWNKPSKPKT (83 aa). Repeat copies occupy residues 54 to 62, 63 to 70, 71 to 78, 79 to 86, and 87 to 95. The tract at residues 54–95 is 5 X 8 AA tandem repeats of P-H-G-G-G-W-G-Q; sequence PQGGGGWGQPHGGGWGQPHGGGWGQPHGGGWGQPHGGGGWGQ. Residues 55–97 show a composition bias toward gly residues; that stretch reads QGGGGWGQPHGGGWGQPHGGGWGQPHGGGWGQPHGGGGWGQGG. Residues H64, G65, G66, H72, G73, G74, H80, G81, G82, H88, G90, and G91 each contribute to the Cu(2+) site. A disulfide bridge connects residues C182 and C217. N184 and N200 each carry an N-linked (GlcNAc...) asparagine glycan. A233 carries the GPI-anchor amidated alanine lipid modification. Positions 234–256 are cleaved as a propeptide — removed in mature form; the sequence is SAILFSSPPVILLISFLIFLIVG.

The protein belongs to the prion family. Monomer and homodimer. Has a tendency to aggregate into amyloid fibrils containing a cross-beta spine, formed by a steric zipper of superposed beta-strands. Soluble oligomers may represent an intermediate stage on the path to fibril formation. Copper binding may promote oligomerization. Interacts with GRB2, APP, ERI3/PRNPIP and SYN1. Mislocalized cytosolically exposed PrP interacts with MGRN1; this interaction alters MGRN1 subcellular location and causes lysosomal enlargement. Interacts with APP. Interacts with KIAA1191. Interacts with ADGRG6.

The protein resides in the cell membrane. The protein localises to the golgi apparatus. Functionally, its primary physiological function is unclear. May play a role in neuronal development and synaptic plasticity. May be required for neuronal myelin sheath maintenance. May promote myelin homeostasis through acting as an agonist for ADGRG6 receptor. May play a role in iron uptake and iron homeostasis. Soluble oligomers are toxic to cultured neuroblastoma cells and induce apoptosis (in vitro). Association with GPC1 (via its heparan sulfate chains) targets PRNP to lipid rafts. Also provides Cu(2+) or Zn(2+) for the ascorbate-mediated GPC1 deaminase degradation of its heparan sulfate side chains. The chain is Major prion protein (PRNP) from Felis catus (Cat).